The chain runs to 510 residues: Transcriptional regulatory protein GAT1 (510 aa).

Position 167 is a phosphoserine (serine 167). Positions 220-256 are enriched in low complexity; the sequence is NHSHNSSHNNNSPSIANNTNANTNTNTSASTNTNSPL. 2 disordered regions span residues 220 to 311 and 358 to 383; these read NHSH…IKCS and QRSSTKINNNITPPPSSSLNPGAAGK. Serine 262 and serine 270 each carry phosphoserine. Positions 274–287 are enriched in basic residues; sequence SSVRKKKPALKKIK. Residues 294 to 306 are compositionally biased toward low complexity; it reads SSATPPSNTSSNP. Residues 310-334 form a GATA-type zinc finger; sequence CSNCTTSTTPLWRKDPKGLPLCNAC. Threonine 369 is modified (phosphothreonine). Serine 399 and serine 418 each carry phosphoserine.

The protein resides in the nucleus. Positive regulator of multiple nitrogen catabolic genes. This chain is Transcriptional regulatory protein GAT1 (GAT1), found in Saccharomyces cerevisiae (strain ATCC 204508 / S288c) (Baker's yeast).